A 312-amino-acid chain; its full sequence is MIEFEKPKITKFDESENYGKFVVEPLERGYGTTLGNSLRRVLLSSLPGAAVTSIQIEGVQHEFATIPGVREDVIQIVLAVKGIAIKSYVESEKQIELDVTGPMDVTAGDILTDSDIEIVNKDHYLFSIAEGHSMRAVMTVKKGYGYVPADENKVDGAPIGTIAVDSIYTPVSKVNYQVEPARVGGDSSYDKLTLEITTNGTIVSDEALSLSAKILTDHLNLFVDLSEVAAEAETLVVKDEVKTERVLDKIIEEMDFSVRAYNGLKRAGINTVTDIVEMSEADMIKVKNLGHKSVEEVKVKLTELGLSLKKRK.

An alpha N-terminal domain (alpha-NTD) region spans residues Met-1–Ser-226. The segment at Thr-243–Lys-312 is alpha C-terminal domain (alpha-CTD).

The protein belongs to the RNA polymerase alpha chain family. In terms of assembly, homodimer. The RNAP catalytic core consists of 2 alpha, 1 beta, 1 beta' and 1 omega subunit. When a sigma factor is associated with the core the holoenzyme is formed, which can initiate transcription.

It carries out the reaction RNA(n) + a ribonucleoside 5'-triphosphate = RNA(n+1) + diphosphate. Its function is as follows. DNA-dependent RNA polymerase catalyzes the transcription of DNA into RNA using the four ribonucleoside triphosphates as substrates. In Lactococcus lactis subsp. cremoris (strain SK11), this protein is DNA-directed RNA polymerase subunit alpha.